The following is a 400-amino-acid chain: Iron(III) enterobactin esterase (400 aa).

The protein belongs to the Fes family.

The protein localises to the cytoplasm. The catalysed reaction is Fe(III)-enterobactin + 3 H2O + H(+) = Fe(III)-[N-(2,3-dihydroxybenzoyl)-L-serine] + 2 N-(2,3-dihydroxybenzoyl)-L-serine. It carries out the reaction Fe(III)-enterobactin + H2O = Fe(III)-[N-(2,3-dihydroxybenzoyl)-L-serine]3 + H(+). The enzyme catalyses Fe(III)-[N-(2,3-dihydroxybenzoyl)-L-serine]3 + H2O + H(+) = Fe(III)-[N-(2,3-dihydroxybenzoyl)-L-serine]2 + N-(2,3-dihydroxybenzoyl)-L-serine. It catalyses the reaction Fe(III)-[N-(2,3-dihydroxybenzoyl)-L-serine]2 + H2O + H(+) = Fe(III)-[N-(2,3-dihydroxybenzoyl)-L-serine] + N-(2,3-dihydroxybenzoyl)-L-serine. The catalysed reaction is enterobactin + 3 H2O = 3 N-(2,3-dihydroxybenzoyl)-L-serine + 2 H(+). Functionally, catalyzes the hydrolysis of ferric enterobactin (Fe-Ent). Is responsible for the release of iron from ferric enterobactin. Also catalyzes the hydrolysis of iron-free enterobactin (Ent). Hydrolyzes ferric monoglucosyl-C-Ent (Fe-MGE) poorly and does not hydrolyze ferric diglucosyl-C-Ent (Fe-DGE) or ferric triglucosyl-C-Ent (Fe-TGE) at all. Also hydrolyzes apo MGE, but catalyzes the hydrolysis of apo DGE very poorly, and does not process apo TGE at all. The catalytic efficiency for processing Fe-Ent is much higher than that for apo Ent, suggesting that Fe-Ent is the physiological substrate. The protein is Iron(III) enterobactin esterase of Escherichia coli O6:H1 (strain CFT073 / ATCC 700928 / UPEC).